Consider the following 155-residue polypeptide: Large ribosomal subunit protein uL22 (155 aa).

The protein belongs to the universal ribosomal protein uL22 family. As to quaternary structure, part of the 50S ribosomal subunit. Contacts the macrolide antibiotic tylosin in the polypeptide exit tunnel.

Its function is as follows. This protein binds specifically to 23S rRNA. It makes multiple contacts with different domains of the 23S rRNA in the assembled 50S subunit and ribosome. Contacts all 6 domains of the 23S rRNA, helping stabilize their relative orientation. An extended beta-hairpin in the C-terminus forms part of the polypeptide exit tunnel, in which it helps forms a bend with protein L4, while most of the rest of the protein is located at the polypeptide exit tunnel on the outside of the subunit. In Haloarcula marismortui (strain ATCC 43049 / DSM 3752 / JCM 8966 / VKM B-1809) (Halobacterium marismortui), this protein is Large ribosomal subunit protein uL22.